Reading from the N-terminus, the 162-residue chain is Interleukin-15 (162 aa).

An N-terminal signal peptide occupies residues Met1–Ala29. A propeptide spanning residues Gly30–Ala48 is cleaved from the precursor. Intrachain disulfides connect Cys83–Cys133 and Cys90–Cys136. N-linked (GlcNAc...) asparagine glycans are attached at residues Asn108, Asn119, Asn127, and Asn143.

The protein belongs to the IL-15/IL-21 family. Expressed in many tissues including heart, spleen, lung, liver, muscle and kidney (at mRNA level). Expressed in many tissues including heart, spleen, lung, liver, muscle and kidney (at protein level).

The protein localises to the secreted. Cytokine that plays a major role in the development of inflammatory and protective immune responses to microbial invaders and parasites by modulating immune cells of both the innate and adaptive immune systems. Stimulates the proliferation of natural killer cells, T-cells and B-cells and promotes the secretion of several cytokines. In monocytes, induces the production of IL8 and monocyte chemotactic protein 1/CCL2, two chemokines that attract neutrophils and monocytes respectively to sites of infection. Unlike most cytokines, which are secreted in soluble form, IL15 is expressed in association with its high affinity IL15RA on the surface of IL15-producing cells and delivers signals to target cells that express IL2RB and IL2RG receptor subunits. Binding to its receptor triggers the phosphorylation of JAK1 and JAK3 and the recruitment and subsequent phosphorylation of signal transducer and activator of transcription-3/STAT3 and STAT5. In mast cells, induces the rapid tyrosine phosphorylation of STAT6 and thereby controls mast cell survival and release of cytokines such as IL4. The chain is Interleukin-15 (IL15) from Oryctolagus cuniculus (Rabbit).